A 387-amino-acid polypeptide reads, in one-letter code: 1-hydroxy-2-naphthoate 1,2-dioxygenasee (387 aa).

Cupin type-2 domains follow at residues 103-171 (FQLV…VWLD) and 271-337 (VQRL…VLLF).

Homohexamer. It depends on Fe(2+) as a cofactor.

It catalyses the reaction 1-hydroxy-2-naphthoate + O2 = (3Z)-4-(2-carboxyphenyl)-2-oxobut-3-enoate + H(+). In terms of biological role, dioxygenase involved in phenanthrene catabolism by mediating cleavage of 1-hydroxy-2-naphthoate. In Nocardioides sp. (strain KP7), this protein is 1-hydroxy-2-naphthoate 1,2-dioxygenasee (phdI).